The primary structure comprises 384 residues: Sialyltransferase-like protein 3 (384 aa).

Residues 1–5 (MKRRH) lie on the Cytoplasmic side of the membrane. A helical; Signal-anchor for type II membrane protein membrane pass occupies residues 6-26 (WSHPSCGLLLLVAVFCLLLVF). Residues 27-384 (RCSQLRHSGD…FRLPPVSFYR (358 aa)) are Lumenal-facing. Asn-241 is a glycosylation site (N-linked (GlcNAc...) asparagine).

Belongs to the glycosyltransferase 29 family.

It localises to the golgi apparatus membrane. In terms of biological role, possesses sialyltransferase-like activity in vitro. Transfers sialic acid to the glycoprotein asialofetuin. The transferred sialic acid is linked to galactose of Gal-beta-1,3-GalNAc through alpha-2,6-linkage. This is Sialyltransferase-like protein 3 from Oryza sativa subsp. indica (Rice).